A 769-amino-acid polypeptide reads, in one-letter code: RNA-directed RNA polymerase (769 aa).

The 117-residue stretch at 463–579 (PIGIGLDASR…FCEKGDFNRI (117 aa)) folds into the RdRp catalytic domain.

Belongs to the tombusviridae RNA polymerase family.

The catalysed reaction is RNA(n) + a ribonucleoside 5'-triphosphate = RNA(n+1) + diphosphate. Probable polymerase. The polypeptide is RNA-directed RNA polymerase (Dianthus barbatus (Carnation)).